The following is a 63-amino-acid chain: MASRILYAAAVVAAVAVSSLAGVAYAADAPAPSPTSGAAAVSSSLVAAVLCPAVALLLGNLRQ.

Residues 1–26 (MASRILYAAAVVAAVAVSSLAGVAYA) form the signal peptide. Serine 36 carries the GPI-anchor amidated serine lipid modification. Residues 37 to 63 (GAAAVSSSLVAAVLCPAVALLLGNLRQ) constitute a propeptide, removed in mature form.

Belongs to the AG-peptide AGP family. Post-translationally, O-glycosylated on hydroxyprolines; noncontiguous hydroxylproline residues are glycosylated with arabinogalactan. Expressed in roots, stems, leaves, flowers and seeds.

It is found in the vacuole. It localises to the aleurone grain membrane. In terms of biological role, proteoglycan that seems to be implicated in diverse developmental roles such as differentiation, cell-cell recognition, embryogenesis and programmed cell death. This is Arabinogalactan peptide 3 (AGPEP3) from Oryza sativa subsp. japonica (Rice).